The primary structure comprises 330 residues: ADP-L-glycero-D-manno-heptose-6-epimerase (330 aa).

NADP(+)-binding positions include 11–12 (FI), 32–33 (DN), lysine 39, lysine 54, 75–79 (EGACS), and asparagine 92. Tyrosine 139 functions as the Proton acceptor in the catalytic mechanism. An NADP(+)-binding site is contributed by lysine 143. Residue asparagine 168 coordinates substrate. Valine 169 and lysine 177 together coordinate NADP(+). Lysine 177 functions as the Proton acceptor in the catalytic mechanism. Substrate is bound by residues arginine 179, histidine 186, 200–203 (FGEY), arginine 213, and tyrosine 292.

Belongs to the NAD(P)-dependent epimerase/dehydratase family. HldD subfamily. As to quaternary structure, homopentamer. NADP(+) is required as a cofactor.

The enzyme catalyses ADP-D-glycero-beta-D-manno-heptose = ADP-L-glycero-beta-D-manno-heptose. The protein operates within nucleotide-sugar biosynthesis; ADP-L-glycero-beta-D-manno-heptose biosynthesis; ADP-L-glycero-beta-D-manno-heptose from D-glycero-beta-D-manno-heptose 7-phosphate: step 4/4. Catalyzes the interconversion between ADP-D-glycero-beta-D-manno-heptose and ADP-L-glycero-beta-D-manno-heptose via an epimerization at carbon 6 of the heptose. The sequence is that of ADP-L-glycero-D-manno-heptose-6-epimerase from Burkholderia vietnamiensis (strain G4 / LMG 22486) (Burkholderia cepacia (strain R1808)).